Reading from the N-terminus, the 565-residue chain is Glycine--tRNA ligase (565 aa).

Substrate is bound by residues R98 and E164. Residues 196–198 (RNE), 206–211 (IRLREF), 323–324 (EI), and 440–443 (GIDR) each bind ATP. Residue 211-215 (FTQAE) coordinates substrate. Substrate is bound at residue 436 to 440 (EPSFG).

It belongs to the class-II aminoacyl-tRNA synthetase family.

The protein localises to the cytoplasm. The enzyme catalyses tRNA(Gly) + glycine + ATP = glycyl-tRNA(Gly) + AMP + diphosphate. Catalyzes the attachment of glycine to tRNA(Gly). This Methanothermobacter thermautotrophicus (strain ATCC 29096 / DSM 1053 / JCM 10044 / NBRC 100330 / Delta H) (Methanobacterium thermoautotrophicum) protein is Glycine--tRNA ligase.